A 291-amino-acid chain; its full sequence is Aspartate carbamoyltransferase catalytic subunit (291 aa).

The carbamoyl phosphate site is built by arginine 47 and threonine 48. Residue lysine 75 participates in L-aspartate binding. The carbamoyl phosphate site is built by arginine 97, histidine 126, and glutamine 129. 2 residues coordinate L-aspartate: arginine 159 and arginine 213. Residues glycine 251 and proline 252 each coordinate carbamoyl phosphate.

It belongs to the aspartate/ornithine carbamoyltransferase superfamily. ATCase family. As to quaternary structure, heterododecamer (2C3:3R2) of six catalytic PyrB chains organized as two trimers (C3), and six regulatory PyrI chains organized as three dimers (R2).

It carries out the reaction carbamoyl phosphate + L-aspartate = N-carbamoyl-L-aspartate + phosphate + H(+). It functions in the pathway pyrimidine metabolism; UMP biosynthesis via de novo pathway; (S)-dihydroorotate from bicarbonate: step 2/3. Its function is as follows. Catalyzes the condensation of carbamoyl phosphate and aspartate to form carbamoyl aspartate and inorganic phosphate, the committed step in the de novo pyrimidine nucleotide biosynthesis pathway. The protein is Aspartate carbamoyltransferase catalytic subunit of Aquifex aeolicus (strain VF5).